We begin with the raw amino-acid sequence, 317 residues long: MKI67 FHA domain-interacting nucleolar phosphoprotein (317 aa).

Ala2 carries the N-acetylalanine modification. Lys40 participates in a covalent cross-link: Glycyl lysine isopeptide (Lys-Gly) (interchain with G-Cter in SUMO2). In terms of domain architecture, RRM spans 47 to 125; sequence GVVYLGHLPS…RLLSCKFMPR (79 aa). Arg116 bears the Omega-N-methylarginine mark. Glycyl lysine isopeptide (Lys-Gly) (interchain with G-Cter in SUMO2) cross-links involve residues Lys181 and Lys194. Arg203 is modified (citrulline). Residues 203-317 form a disordered region; it reads RDSEGNQVLP…KRPRKRKSKQ (115 aa). Residues 213–233 show a composition bias toward basic and acidic residues; it reads DQKEGLSGEPRRKEKMMKEDI. Ser219 carries the phosphoserine modification. Basic residues predominate over residues 238-248; sequence PKKRKRSRRKK. Ser253 is subject to Phosphoserine. Thr257 and Thr261 each carry phosphothreonine. Basic and acidic residues predominate over residues 265–284; it reads LERRKSQVMEVGGDKDDEII. Arg267 and Arg268 each carry omega-N-methylated arginine. Ser270 carries the post-translational modification Phosphoserine. Lys293 is covalently cross-linked (Glycyl lysine isopeptide (Lys-Gly) (interchain with G-Cter in SUMO1); alternate). A Glycyl lysine isopeptide (Lys-Gly) (interchain with G-Cter in SUMO2); alternate cross-link involves residue Lys293. Position 301 is a phosphothreonine (Thr301). The segment covering 308-317 has biased composition (basic residues); it reads KRPRKRKSKQ.

As to quaternary structure, binds to the FHA domain of MKI67; this interaction is enhanced in mitosis. In terms of processing, phosphorylated. Citrullinated by PADI4. As to expression, expressed in brain, heart, hind limb muscles, intestine, liver, skin and spleen.

It is found in the nucleus. The protein resides in the nucleolus. Its subcellular location is the chromosome. The protein is MKI67 FHA domain-interacting nucleolar phosphoprotein (Nifk) of Mus musculus (Mouse).